A 171-amino-acid chain; its full sequence is 3-hydroxydecanoyl-[acyl-carrier-protein] dehydratase (171 aa).

The active site involves His70.

It belongs to the thioester dehydratase family. FabA subfamily. Homodimer.

It localises to the cytoplasm. The catalysed reaction is a (3R)-hydroxyacyl-[ACP] = a (2E)-enoyl-[ACP] + H2O. The enzyme catalyses (3R)-hydroxydecanoyl-[ACP] = (2E)-decenoyl-[ACP] + H2O. It catalyses the reaction (2E)-decenoyl-[ACP] = (3Z)-decenoyl-[ACP]. It participates in lipid metabolism; fatty acid biosynthesis. Functionally, necessary for the introduction of cis unsaturation into fatty acids. Catalyzes the dehydration of (3R)-3-hydroxydecanoyl-ACP to E-(2)-decenoyl-ACP and then its isomerization to Z-(3)-decenoyl-ACP. Can catalyze the dehydratase reaction for beta-hydroxyacyl-ACPs with saturated chain lengths up to 16:0, being most active on intermediate chain length. In Xanthomonas oryzae pv. oryzae (strain MAFF 311018), this protein is 3-hydroxydecanoyl-[acyl-carrier-protein] dehydratase.